Consider the following 186-residue polypeptide: Signal peptidase I P (186 aa).

Residues 1–15 lie on the Cytoplasmic side of the membrane; sequence MTKEKVFKKKSSILE. The helical transmembrane segment at 16–35 threads the bilayer; it reads WGKAIVIAVILALLIRNFLF. Over 36–186 the chain is Extracellular; it reads EPYVVEGKSM…FPFSNMRKAK (151 aa). Residues Ser44 and Lys86 contribute to the active site.

Belongs to the peptidase S26 family.

It is found in the cell membrane. It catalyses the reaction Cleavage of hydrophobic, N-terminal signal or leader sequences from secreted and periplasmic proteins.. This is Signal peptidase I P (sipP) from Bacillus subtilis subsp. natto.